The sequence spans 362 residues: G-prodeshotein coupled receptor 4 (362 aa).

Topologically, residues 1-8 (MGNHTWEG) are extracellular. Asn-3 carries N-linked (GlcNAc...) asparagine glycosylation. The helical transmembrane segment at 9-45 (CHVDSRVDHLFPPSLYIFVIGVGLPTNCLALWAAYRQ) threads the bilayer. Intrachain disulfides connect Cys-9–Cys-258 and Cys-90–Cys-168. Over 46-49 (VQQR) the chain is Cytoplasmic. Residues 50–80 (NELGVYLMNLSIADLLYICTLPLWVDYFLHH) traverse the membrane as a helical segment. Residues 81–85 (DNWIH) lie on the Extracellular side of the membrane. Residues 86–121 (GPGSCKLFGFIFYTNIYISIAFLCCISVDRYLAVAH) form a helical membrane-spanning segment. Residues 122–129 (PLRFARLR) lie on the Cytoplasmic side of the membrane. The helical transmembrane segment at 130–156 (RVKTAVAVSSVVWATELGANSAPLFHD) threads the bilayer. The Extracellular segment spans residues 157–172 (ELFRDRYNHTFCFEKF). The interval 157–172 (ELFRDRYNHTFCFEKF) is extracellular loop 2 (ECL2). Asn-164 carries N-linked (GlcNAc...) asparagine glycosylation. Residues 173–210 (PMEGWVAWMNLYRVFVGFLFPWALMLLSYRGILRAVRG) traverse the membrane as a helical segment. Over 211–214 (SVST) the chain is Cytoplasmic. Residues 215–250 (ERQEKAKIKRLALSLIAIVLVCFAPYHVLLLSRSAI) form a helical membrane-spanning segment. Residues 251–260 (YLGRPWDCGF) lie on the Extracellular side of the membrane. Residues 261–289 (EERVFSAYHSSLAFTSLNCVADPILYCLV) traverse the membrane as a helical segment. Residues 290-362 (NEGARSDVAK…VQLKMLPPAQ (73 aa)) are Cytoplasmic-facing. The segment at 335–362 (AKAMTGSWAATPPSQGDQVQLKMLPPAQ) is disordered.

The protein belongs to the G-protein coupled receptor 1 family.

Its subcellular location is the cell membrane. Its activity is regulated as follows. Activated by a network of residues that connects an extracellular-facing cavity to Glu-145, a conserved charged residue buried in the transmembrane core of the receptor. Protonation likely drives conformational changes in extracellular loop 2 (ECL2), which stabilizes movement of transmembrane 3 (TM3) and a series of rearrangements that connect the extracellular-facing cavity to Glu-145, a residue only conserved in proton-sensing G-protein coupled receptors. Its function is as follows. Proton-sensing G-protein coupled receptor activated by extracellular pH, which is required to monitor pH changes and generate adaptive reactions. Activated by an optimal pH of 6.8-7.2. Ligand binding causes a conformation change that triggers signaling via guanine nucleotide-binding proteins (G proteins) and modulates the activity of downstream effectors, such as adenylate cyclase. GPR4 is mainly coupled to G(s) G proteins and mediates activation of adenylate cyclase activity. May also couple with G(q) and G(12)/G(13) G proteins. Acts as a key regulator of respiratory sensitivity to CO2/H(+) in brain retrotrapezoid nucleus neurons: acts by mediating detection of protons generated by the formation of carbonic acid in the blood, an important mechanism to impulse to breathe. Also acts as a regulator of acid secretion in the kidney collecting duct by maintaining acid-base homeostasis in the kidney. Acidosis-induced GPR4 activation increases paracellular gap formation and permeability of vascular endothelial cells, possibly through the G(12)/G(13)/Rho GTPase signaling pathway. The polypeptide is G-prodeshotein coupled receptor 4 (Homo sapiens (Human)).